Here is a 256-residue protein sequence, read N- to C-terminus: Acetyl-coenzyme A carboxylase carboxyl transferase subunit alpha (256 aa).

The region spanning 1–236 (MTDVSRVLKE…KANLIEQITS (236 aa)) is the CoA carboxyltransferase C-terminal domain.

It belongs to the AccA family. Acetyl-CoA carboxylase is a heterohexamer composed of biotin carboxyl carrier protein (AccB), biotin carboxylase (AccC) and two subunits each of ACCase subunit alpha (AccA) and ACCase subunit beta (AccD).

The protein localises to the cytoplasm. It carries out the reaction N(6)-carboxybiotinyl-L-lysyl-[protein] + acetyl-CoA = N(6)-biotinyl-L-lysyl-[protein] + malonyl-CoA. It functions in the pathway lipid metabolism; malonyl-CoA biosynthesis; malonyl-CoA from acetyl-CoA: step 1/1. Component of the acetyl coenzyme A carboxylase (ACC) complex. First, biotin carboxylase catalyzes the carboxylation of biotin on its carrier protein (BCCP) and then the CO(2) group is transferred by the carboxyltransferase to acetyl-CoA to form malonyl-CoA. The polypeptide is Acetyl-coenzyme A carboxylase carboxyl transferase subunit alpha (Streptococcus pyogenes serotype M12 (strain MGAS2096)).